The sequence spans 188 residues: dCTP deaminase (188 aa).

Residue Lys-109–Arg-114 coordinates dCTP. The active-site Proton donor/acceptor is Glu-135. Gln-154, Tyr-168, and Gln-178 together coordinate dCTP.

Belongs to the dCTP deaminase family. Homotrimer.

It catalyses the reaction dCTP + H2O + H(+) = dUTP + NH4(+). Its pathway is pyrimidine metabolism; dUMP biosynthesis; dUMP from dCTP (dUTP route): step 1/2. Catalyzes the deamination of dCTP to dUTP. This chain is dCTP deaminase, found in Helicobacter hepaticus (strain ATCC 51449 / 3B1).